Consider the following 968-residue polypeptide: RNA polymerase-associated protein RapA (968 aa).

Residues 164–334 (DVGRRHAPRV…FARLRLLDPN (171 aa)) enclose the Helicase ATP-binding domain. ATP is bound at residue 177–184 (DEVGLGKT). The short motif at 280–283 (DEAH) is the DEAH box element. The region spanning 490–662 (RVEWLMGYLT…YLASPDQTEG (173 aa)) is the Helicase C-terminal domain.

It belongs to the SNF2/RAD54 helicase family. RapA subfamily. Interacts with the RNAP. Has a higher affinity for the core RNAP than for the holoenzyme. Its ATPase activity is stimulated by binding to RNAP.

In terms of biological role, transcription regulator that activates transcription by stimulating RNA polymerase (RNAP) recycling in case of stress conditions such as supercoiled DNA or high salt concentrations. Probably acts by releasing the RNAP, when it is trapped or immobilized on tightly supercoiled DNA. Does not activate transcription on linear DNA. Probably not involved in DNA repair. This chain is RNA polymerase-associated protein RapA, found in Escherichia fergusonii (strain ATCC 35469 / DSM 13698 / CCUG 18766 / IAM 14443 / JCM 21226 / LMG 7866 / NBRC 102419 / NCTC 12128 / CDC 0568-73).